The following is a 60-amino-acid chain: Ribosome biogenesis protein Nop10 (60 aa).

The protein belongs to the NOP10 family.

Involved in ribosome biogenesis; more specifically in 18S rRNA pseudouridylation and in cleavage of pre-rRNA. This is Ribosome biogenesis protein Nop10 from Haloquadratum walsbyi (strain DSM 16790 / HBSQ001).